A 431-amino-acid polypeptide reads, in one-letter code: MTEFSPREIVSELDRYIVGHTEAKKAVAVALRNRWRRRRVPADLRDEVTPKNILLIGPTGVGKTEIARRLAKLAQAPFLKVEATKFTEVGYVGRDVDQIVRDLVESALSMVRDKRRGGVKAKAEAAAEERILDALTGPGSTAARESFRKKLRAGELDDKEVELQLADTGGGGMFEIPGQPGASVLNLSEMMKSFGGGRTKTHKTTVVGAWAPLIAEESDKLLDQEALTQEALELAENHGIVFLDEIDKVASSSQRGGADVSREGVQRDLLPLIEGTTVSTKYGPVKTDHILFIASGAFHVAKPSDLLPELQGRLPIRVELKGLTRDDLRRILTEPEANLIRQHQALLLTEGVTLVFTEEAIDAVADAAVAVNASVENIGARRLQTILEKVVEEISFTAADRSGETVTVDADYVQARIGALAANADLSRFIL.

ATP-binding positions include Val18, 60–65 (GVGKTE), Asp244, Glu309, and Arg381.

The protein belongs to the ClpX chaperone family. HslU subfamily. As to quaternary structure, a double ring-shaped homohexamer of HslV is capped on each side by a ring-shaped HslU homohexamer. The assembly of the HslU/HslV complex is dependent on binding of ATP.

Its subcellular location is the cytoplasm. Its function is as follows. ATPase subunit of a proteasome-like degradation complex; this subunit has chaperone activity. The binding of ATP and its subsequent hydrolysis by HslU are essential for unfolding of protein substrates subsequently hydrolyzed by HslV. HslU recognizes the N-terminal part of its protein substrates and unfolds these before they are guided to HslV for hydrolysis. This Caulobacter sp. (strain K31) protein is ATP-dependent protease ATPase subunit HslU.